The primary structure comprises 110 residues: Large ribosomal subunit protein uL22 (110 aa).

The protein belongs to the universal ribosomal protein uL22 family. Part of the 50S ribosomal subunit.

This protein binds specifically to 23S rRNA; its binding is stimulated by other ribosomal proteins, e.g. L4, L17, and L20. It is important during the early stages of 50S assembly. It makes multiple contacts with different domains of the 23S rRNA in the assembled 50S subunit and ribosome. Functionally, the globular domain of the protein is located near the polypeptide exit tunnel on the outside of the subunit, while an extended beta-hairpin is found that lines the wall of the exit tunnel in the center of the 70S ribosome. The polypeptide is Large ribosomal subunit protein uL22 (Histophilus somni (strain 129Pt) (Haemophilus somnus)).